The following is a 239-amino-acid chain: UDP-2,3-diacylglucosamine hydrolase (239 aa).

Asp8, His10, Asp41, Asn78, and His113 together coordinate Mn(2+). 78–79 provides a ligand contact to substrate; that stretch reads NR. Substrate-binding residues include Asp121, Ser159, Asn163, Lys166, and His194. Mn(2+)-binding residues include His194 and His196.

This sequence belongs to the LpxH family. Mn(2+) serves as cofactor.

The protein resides in the cell inner membrane. The catalysed reaction is UDP-2-N,3-O-bis[(3R)-3-hydroxytetradecanoyl]-alpha-D-glucosamine + H2O = 2-N,3-O-bis[(3R)-3-hydroxytetradecanoyl]-alpha-D-glucosaminyl 1-phosphate + UMP + 2 H(+). It functions in the pathway glycolipid biosynthesis; lipid IV(A) biosynthesis; lipid IV(A) from (3R)-3-hydroxytetradecanoyl-[acyl-carrier-protein] and UDP-N-acetyl-alpha-D-glucosamine: step 4/6. Hydrolyzes the pyrophosphate bond of UDP-2,3-diacylglucosamine to yield 2,3-diacylglucosamine 1-phosphate (lipid X) and UMP by catalyzing the attack of water at the alpha-P atom. Involved in the biosynthesis of lipid A, a phosphorylated glycolipid that anchors the lipopolysaccharide to the outer membrane of the cell. The sequence is that of UDP-2,3-diacylglucosamine hydrolase from Shewanella sp. (strain MR-7).